Reading from the N-terminus, the 842-residue chain is GPI ethanolamine phosphate transferase 2 (842 aa).

Asn-186 carries N-linked (GlcNAc...) asparagine glycosylation. Residues 409–429 form a helical membrane-spanning segment; it reads YNYPLLFIGCFLSIVITGTIY. Asn-441 carries N-linked (GlcNAc...) asparagine glycosylation. Helical transmembrane passes span 442–462 and 468–488; these read TSIL…SSFI and FWWW…NFSS. N-linked (GlcNAc...) asparagine glycosylation occurs at Asn-506. The helical transmembrane segment at 524–544 threads the bilayer; that stretch reads GNIDALWWLNLITVTVVGLNL. The N-linked (GlcNAc...) asparagine glycan is linked to Asn-551. A helical membrane pass occupies residues 554 to 574; the sequence is VSLLGFSDLLSMGLLSMITFL. The N-linked (GlcNAc...) asparagine glycan is linked to Asn-578. Helical transmembrane passes span 615-635, 698-718, and 740-760; these read IHTA…AVLV, YLLA…QSGG, and IYVV…YWSF. N-linked (GlcNAc...) asparagine glycosylation occurs at Asn-771. Helical transmembrane passes span 783–803 and 821–841; these read YPFI…CIIL and MVWT…LLLL.

This sequence belongs to the PIGG/PIGN/PIGO family. PIGG subfamily.

It is found in the endoplasmic reticulum membrane. The protein operates within glycolipid biosynthesis; glycosylphosphatidylinositol-anchor biosynthesis. In terms of biological role, ethanolamine phosphate transferase involved in glycosylphosphatidylinositol-anchor biosynthesis. Transfers ethanolamine phosphate to the GPI second mannose. This chain is GPI ethanolamine phosphate transferase 2 (LAS21), found in Candida glabrata (strain ATCC 2001 / BCRC 20586 / JCM 3761 / NBRC 0622 / NRRL Y-65 / CBS 138) (Yeast).